The primary structure comprises 907 residues: Protein translocase subunit SecA (907 aa).

ATP contacts are provided by residues Gln87, 105–109, and Asp512; that span reads GEGKT. Residues 869-897 form a disordered region; it reads AESLSAHTPVVREGEKVGRNDPCPCGSGR. A compositionally biased stretch (basic and acidic residues) spans 878–887; it reads VVREGEKVGR. Positions 891, 893, 902, and 903 each coordinate Zn(2+).

It belongs to the SecA family. Monomer and homodimer. Part of the essential Sec protein translocation apparatus which comprises SecA, SecYEG and auxiliary proteins SecDF-YajC and YidC. Requires Zn(2+) as cofactor.

It is found in the cell inner membrane. The protein resides in the cytoplasm. The enzyme catalyses ATP + H2O + cellular proteinSide 1 = ADP + phosphate + cellular proteinSide 2.. Its function is as follows. Part of the Sec protein translocase complex. Interacts with the SecYEG preprotein conducting channel. Has a central role in coupling the hydrolysis of ATP to the transfer of proteins into and across the cell membrane, serving both as a receptor for the preprotein-SecB complex and as an ATP-driven molecular motor driving the stepwise translocation of polypeptide chains across the membrane. The chain is Protein translocase subunit SecA from Shewanella sediminis (strain HAW-EB3).